The following is a 543-amino-acid chain: UBP9-binding protein bun62 (543 aa).

Ser43 is subject to Phosphoserine. WD repeat units follow at residues 239-279, 320-361, 362-401, 404-448, and 513-542; these read LNSS…QPLH, FSKS…DVFH, SYFA…LVAR, GHKS…IHRP, and VDDS…TWQR.

As to quaternary structure, interacts with ubp9 and bun107.

The protein resides in the nucleus. It localises to the cytoplasm. It is found in the cell tip. Functionally, required for the ubp9 recruitment to septa and cell tips but also for its enzymatic activity at these specific locations. This is UBP9-binding protein bun62 (bun62) from Schizosaccharomyces pombe (strain 972 / ATCC 24843) (Fission yeast).